The primary structure comprises 536 residues: Caspase recruitment domain-containing protein 9 (536 aa).

Position 2 is a phosphoserine (S2). D3, C10, and H73 together coordinate Zn(2+). In terms of domain architecture, CARD spans 6–98 (NDDECWSTLE…QLYRKVTGKE (93 aa)). The interval 99–116 (PARVFSMIIDASGESGLT) is linker. A coiled-coil region spans residues 117-272 (QLLMTEVMKL…ELQVSVQEGK (156 aa)). Residue K125 forms a Glycyl lysine isopeptide (Lys-Gly) (interchain with G-Cter in ubiquitin) linkage. T231 carries the phosphothreonine; by PKC/PRKCD modification. A Phosphoserine modification is found at S277. Positions 303-415 (SLRKDLRQAE…LLAAEGRLKQ (113 aa)) form a coiled coil. A phosphoserine mark is found at S424, S425, S431, S451, S461, S483, and S498. The tract at residues 425–451 (SDLEDSSPRNSQELSLPQDLEEDAQLS) is disordered. The tract at residues 476–536 (LTHGMGPSSS…GSDNTDTEGS (61 aa)) is disordered. Over residues 487-502 (PPEKERRRLKESFENY) the composition is skewed to basic and acidic residues. A phosphothreonine; by CK2 mark is found at T531 and T533.

Monomer. Homodimer; homodimerization is mediated by the CARD domain which forms an extensive interaction with the adjacent linker and coiled-coil regions; leads to an autoinhibited state. Homomultimer; polymerizes following activation, forming a nucleating helical template that seeds BCL10-filament formation via a CARD-CARD interaction. Interacts (via CARD domain) with BCL10 (via CARD domain); interaction takes place following CARD9 activation and polymerization, leading to the formation of a filamentous CBM complex assembly. Component of a CBM complex (CARD9-BCL10, MALT1), composed of CARD9, BCL10 and MALT1. Interacts with RASGRF1. Interacts with NOD2 (via NACHT domain); interaction is direct. Interacts with RIPK2. Interacts with VHL; without leading to protein degradation. Post-translationally, phosphorylated at Thr-231 by PRKCD downstream of C-type lectin receptors activation: phosphorylation promotes interaction with BCL10, followed by activation of NF-kappa-B and MAP kinase p38 pathways. Phosphorylated at Thr-531 and Thr-531 by CK2 following interaction with VHL, leading to inhibit the ability to activate NF-kappa-B. Ubiquitinated at Lys-125 via 'Lys-27'-linked ubiquitin by TRIM62 downstream of C-type lectin receptors activation; leading to CARD9 activation, followed by activation of NF-kappa-B and MAP kinase p38 pathways. Deubiquitinated at Lys-125 by USP15, inhibiting CARD9. As to expression, specifically expressed in myeloid cells. Not expressed in non-lymphoid organs.

The protein resides in the cytoplasm. With respect to regulation, maintained in an autoinhibited state via homodimerization in which the CARD domain forms an extensive interaction with the adjacent linker and coiled-coil regions. Activation downstream of C-type lectin receptors, by phosphorylation by PRKCD and/or ubiquitination by TRIM62, triggers disruption of the CARD domain-coiled coil interface, CARD9 homooligomerization and BCL10 recruitment, followed by activation of NF-kappa-B and MAP kinase p38 pathways. Zinc-binding inhibits activation by stabilizing the CARD ground-state conformation and restricting its capacity to form BCL10-nucleating filaments. Adapter protein that plays a key role in innate immune response against fungi by forming signaling complexes downstream of C-type lectin receptors. CARD9-mediated signals are essential for antifungal immunity against a subset of fungi from the phylum Ascomycota. Transduces signals in myeloid cells downstream of C-type lectin receptors CLEC7A (dectin-1), CLEC6A (dectin-2) and CLEC4E (Mincle), which detect pathogen-associated molecular pattern metabolites (PAMPs), such as fungal carbohydrates, and trigger CARD9 activation. Upon activation, CARD9 homooligomerizes to form a nucleating helical template that recruits BCL10 via CARD-CARD interaction, thereby promoting polymerization of BCL10 and subsequent recruitment of MALT1: this leads to activation of NF-kappa-B and MAP kinase p38 (MAPK11, MAPK12, MAPK13 and/or MAPK14) pathways which stimulate expression of genes encoding pro-inflammatory cytokines and chemokines. CARD9 signaling in antigen-presenting cells links innate sensing of fungi to the activation of adaptive immunity and provides a cytokine milieu that induces the development and subsequent of interleukin 17-producing T helper (Th17) cells. Also involved in activation of myeloid cells via classical ITAM-associated receptors and TLR: required for TLR-mediated activation of MAPK, while it is not required for TLR-induced activation of NF-kappa-B. CARD9 can also be engaged independently of BCL10: forms a complex with RASGRF1 downstream of C-type lectin receptors, which recruits and activates HRAS, leading to ERK activation and the production of cytokines. Acts as an important regulator of the intestinal commensal fungi (mycobiota) component of the gut microbiota. Plays an essential role in antifungal immunity against dissemination of gut fungi: acts by promoting induction of antifungal IgG antibodies response in CX3CR1(+) macrophages to confer protection against disseminated C.albicans or C.auris infection. Also mediates immunity against other pathogens, such as certain bacteria, viruses and parasites; CARD9 signaling is however redundant with other innate immune responses. In response to L.monocytogenes infection, required for the production of inflammatory cytokines activated by intracellular peptidoglycan: acts by connecting NOD2 recognition of peptidoglycan to downstream activation of MAP kinases (MAPK) without activating NF-kappa-B. This Mus musculus (Mouse) protein is Caspase recruitment domain-containing protein 9.